The sequence spans 134 residues: Orexigenic neuropeptide QRFP (134 aa).

The first 18 residues, M1–C18, serve as a signal peptide directing secretion. A propeptide spanning residues F19–R88 is cleaved from the precursor. F131 carries the post-translational modification Phenylalanine amide.

The protein belongs to the RFamide neuropeptide family. As to quaternary structure, ligand for the G-protein coupled receptor QRFPR/GPR103. As to expression, expressed in the hypothalamus.

It is found in the secreted. Stimulates feeding behavior, metabolic rate and locomotor activity and increases blood pressure. May have orexigenic activity. May promote aldosterone secretion by the adrenal gland. The chain is Orexigenic neuropeptide QRFP from Bos taurus (Bovine).